The primary structure comprises 248 residues: Triosephosphate isomerase (248 aa).

9 to 11 (NWK) provides a ligand contact to substrate. Histidine 101 (electrophile) is an active-site residue. Glutamate 170 (proton acceptor) is an active-site residue. Residues glycine 176, serine 208, and 229–230 (GG) each bind substrate.

Belongs to the triosephosphate isomerase family. As to quaternary structure, homodimer.

The protein resides in the cytoplasm. It carries out the reaction D-glyceraldehyde 3-phosphate = dihydroxyacetone phosphate. It functions in the pathway carbohydrate biosynthesis; gluconeogenesis. It participates in carbohydrate degradation; glycolysis; D-glyceraldehyde 3-phosphate from glycerone phosphate: step 1/1. Functionally, involved in the gluconeogenesis. Catalyzes stereospecifically the conversion of dihydroxyacetone phosphate (DHAP) to D-glyceraldehyde-3-phosphate (G3P). This chain is Triosephosphate isomerase, found in Mycoplasmopsis pulmonis (strain UAB CTIP) (Mycoplasma pulmonis).